The chain runs to 110 residues: Phosphoribosyl-ATP pyrophosphatase (110 aa).

It belongs to the PRA-PH family.

The protein localises to the cytoplasm. It catalyses the reaction 1-(5-phospho-beta-D-ribosyl)-ATP + H2O = 1-(5-phospho-beta-D-ribosyl)-5'-AMP + diphosphate + H(+). The protein operates within amino-acid biosynthesis; L-histidine biosynthesis; L-histidine from 5-phospho-alpha-D-ribose 1-diphosphate: step 2/9. The chain is Phosphoribosyl-ATP pyrophosphatase from Pseudomonas fluorescens (strain Pf0-1).